The primary structure comprises 381 residues: 2-oxoglutarate-dependent dioxygenase FGSG_00048 (381 aa).

This sequence belongs to the iron/ascorbate-dependent oxidoreductase family. The cofactor is Fe(2+).

It functions in the pathway mycotoxin biosynthesis. Functionally, 2-oxoglutarate-dependent dioxygenase; part of the gene cluster that mediates the biosynthesis of gramillins A and B, bicyclic lipopeptides that induce cell death in maize leaves but not in wheat leaves. The nonribosomal peptide synthetase GRA1 incorporates respectively a glutamic adic (Glu), a leucine (Leu), a serine (Ser), a hydroxyglutamine (HOGln), a 2-amino decanoic acid, and 2 cysteins (CysB and CysA). The biosynthesis of 2-amino decanoic acid incorporated in gramillins could be initiated by a fatty acid synthase composed of the alpha and beta subunits FGSG_00036 and FGSG_11656. The cytochrome P450 monooxygenase FGSG_15680 could hydroxylate the fatty acid chain. Subsequent oxidation to the ketone by the oxidoreductase FGSG_00048 and transamination by aminotransferase FGSG_00049 could form 2-amino-decanoic acid. On the other hand, FGSG_15680 could also be responsible for the HO-modified glutamine at the gamma-position. Whether hydroxylation occurs on the fully assembled product or on the Gln residue prior to assembly into the gramillins requires further proof. The thioredoxin FGSG_00043 could also be required for the disulfide-bond formation between CysA and CysB. The specific involvement of the remaining proteins from the cluster is more difficult to discern, but could have broader regulatory (FGSG_00040 and FGSG_11657) or enzymatic functions (FGSG_00044 and FGSG_00045). The final C-domain of GRA1 does not possess the expected sequence of a termination CT domain, often implicated in macrocyclization and release of a cyclopeptidein fungal NRPs; and the thioesterase FGSG_00047 may act in concert with the terminal C-domain of GRA1 to catalyze the formation of the macrocyclic anhydride and release of the products. This is 2-oxoglutarate-dependent dioxygenase FGSG_00048 from Gibberella zeae (strain ATCC MYA-4620 / CBS 123657 / FGSC 9075 / NRRL 31084 / PH-1) (Wheat head blight fungus).